A 123-amino-acid polypeptide reads, in one-letter code: Histone H2B.1, embryonic (123 aa).

The interval 1-32 (MAPTGQVAKKGSKKAVKPPRASGGKKRHRKRK) is disordered. Residues 10–32 (KGSKKAVKPPRASGGKKRHRKRK) are compositionally biased toward basic residues. Serine 110 is a glycosylation site (O-linked (GlcNAc) serine). A Glycyl lysine isopeptide (Lys-Gly) (interchain with G-Cter in ubiquitin) cross-link involves residue lysine 118.

It belongs to the histone H2B family. The nucleosome is a histone octamer containing two molecules each of H2A, H2B, H3 and H4 assembled in one H3-H4 heterotetramer and two H2A-H2B heterodimers. The octamer wraps approximately 147 bp of DNA. Monoubiquitination of Lys-118 gives a specific tag for epigenetic transcriptional activation and is also prerequisite for histone H3 'Lys-4' and 'Lys-79' methylation. Post-translationally, glcNAcylation at Ser-110 promotes monoubiquitination of Lys-118. It fluctuates in response to extracellular glucose, and associates with transcribed genes.

It localises to the nucleus. The protein localises to the chromosome. In terms of biological role, core component of nucleosome. Nucleosomes wrap and compact DNA into chromatin, limiting DNA accessibility to the cellular machineries which require DNA as a template. Histones thereby play a central role in transcription regulation, DNA repair, DNA replication and chromosomal stability. DNA accessibility is regulated via a complex set of post-translational modifications of histones, also called histone code, and nucleosome remodeling. This Psammechinus miliaris (Green sea urchin) protein is Histone H2B.1, embryonic.